A 919-amino-acid chain; its full sequence is Phosphoenolpyruvate carboxylase (919 aa).

Active-site residues include His-138 and Lys-579.

This sequence belongs to the PEPCase type 1 family. Mg(2+) is required as a cofactor.

It carries out the reaction oxaloacetate + phosphate = phosphoenolpyruvate + hydrogencarbonate. Forms oxaloacetate, a four-carbon dicarboxylic acid source for the tricarboxylic acid cycle. The polypeptide is Phosphoenolpyruvate carboxylase (Corynebacterium glutamicum (Brevibacterium saccharolyticum)).